A 501-amino-acid chain; its full sequence is Beta-secretase 1 (501 aa).

The first 21 residues, 1–21, serve as a signal peptide directing secretion; it reads MAPALHWLLLWVGSGMLPAQG. Residues 22–45 constitute a propeptide that is removed on maturation; it reads THLGIRLPLRSGLAGPPLGLRLPR. The Extracellular portion of the chain corresponds to 22–457; the sequence is THLGIRLPLR…PQTDESTLMT (436 aa). The segment at 39–58 is disordered; that stretch reads LGLRLPRETDEESEEPGRRG. One can recognise a Peptidase A1 domain in the interval 75 to 416; sequence YYVEMTVGSP…DRARKRIGFA (342 aa). Asp-93 is a catalytic residue. Lys-126 carries the N6-acetyllysine modification. Residues Asn-153, Asn-172, and Asn-223 are each glycosylated (N-linked (GlcNAc...) asparagine). 3 cysteine pairs are disulfide-bonded: Cys-216-Cys-420, Cys-278-Cys-443, and Cys-330-Cys-380. An N6-acetyllysine mark is found at Lys-275, Lys-279, and Lys-285. Asp-289 is an active-site residue. N6-acetyllysine is present on residues Lys-299, Lys-300, and Lys-307. N-linked (GlcNAc...) asparagine glycosylation occurs at Asn-354. Residues 458–478 form a helical membrane-spanning segment; sequence IAYVMAAICALFMLPLCLMVC. 4 S-palmitoyl cysteine lipidation sites follow: Cys-474, Cys-478, Cys-482, and Cys-485. Residues 479–501 lie on the Cytoplasmic side of the membrane; sequence QWRCLRCLRHQHDDFADDISLLK. Positions 479-501 are interaction with RTN3; that stretch reads QWRCLRCLRHQHDDFADDISLLK. A DXXLL motif is present at residues 496–500; sequence DISLL. The residue at position 498 (Ser-498) is a Phosphoserine. Lys-501 is covalently cross-linked (Glycyl lysine isopeptide (Lys-Gly) (interchain with G-Cter in ubiquitin)).

Belongs to the peptidase A1 family. In terms of assembly, monomer. Interacts (via DXXLL motif) with GGA1, GGA2 and GGA3 (via their VHS domain); the interaction highly increases when BACE1 is phosphorylated at Ser-498. Interacts with RTN1; RTN2; RTN3 and RTN4; the interaction leads to inhibition of amyloid precursor protein processing. Interacts with SNX6. Interacts with PCSK9. Interacts with NAT8 and NAT8B. Interacts with BIN1. Interacts (via extracellular domain) with ADAM10 (via extracellular domain). Interacts with SORL1; this interaction may affect binding with APP and hence reduce APP cleavage. Interacts with NRDC AND NRG1. N-Glycosylated. Addition of a bisecting N-acetylglucosamine by MGAT3 blocks lysosomal targeting, further degradation and is required for maintaining stability under stress conditions. Post-translationally, palmitoylation mediates lipid raft localization. In terms of processing, acetylated in the endoplasmic reticulum at Lys-126, Lys-275, Lys-279, Lys-285, Lys-299, Lys-300 and Lys-307. Acetylation by NAT8 and NAT8B is transient and deacetylation probably occurs in the Golgi. Acetylation regulates the maturation, the transport to the plasma membrane, the stability and the expression of the protein. Ubiquitinated at Lys-501, ubiquitination leads to lysosomal degradation. Monoubiquitinated and 'Lys-63'-linked polyubitinated. Deubiquitnated by USP8; inhibits lysosomal degradation. Post-translationally, phosphorylation at Ser-498 is required for interaction with GGA1 and retrograded transport from endosomal compartments to the trans-Golgi network. Non-phosphorylated BACE1 enters a direct recycling route to the cell surface. In terms of tissue distribution, expressed in the brain, specifically in neurons and astrocytes (at protein level).

It localises to the cell membrane. It is found in the golgi apparatus. The protein resides in the trans-Golgi network. Its subcellular location is the endoplasmic reticulum. The protein localises to the endosome. It localises to the late endosome. It is found in the early endosome. The protein resides in the cell surface. Its subcellular location is the cytoplasmic vesicle membrane. The protein localises to the membrane raft. It localises to the lysosome. It is found in the recycling endosome. The protein resides in the cell projection. Its subcellular location is the axon. The protein localises to the dendrite. It catalyses the reaction Broad endopeptidase specificity. Cleaves Glu-Val-Asn-Leu-|-Asp-Ala-Glu-Phe in the Swedish variant of Alzheimer's amyloid precursor protein.. Its activity is regulated as follows. Inhibited by RTN3 and RTN4. Its function is as follows. Responsible for the proteolytic processing of the amyloid precursor protein (APP). Cleaves at the N-terminus of the A-beta peptide sequence, between residues 671 and 672 of APP, leads to the generation and extracellular release of beta-cleaved soluble APP, and a corresponding cell-associated C-terminal fragment which is later released by gamma-secretase. Cleaves CHL1. The chain is Beta-secretase 1 from Mus musculus (Mouse).